The sequence spans 175 residues: Nucleoside-triphosphatase THEP1 (175 aa).

Residues 16–23 (GMPGVGKT) and 103–110 (VAFIDEIG) each bind ATP.

It belongs to the THEP1 NTPase family.

It carries out the reaction a ribonucleoside 5'-triphosphate + H2O = a ribonucleoside 5'-diphosphate + phosphate + H(+). Its function is as follows. Has nucleotide phosphatase activity towards ATP, GTP, CTP, TTP and UTP. May hydrolyze nucleoside diphosphates with lower efficiency. The sequence is that of Nucleoside-triphosphatase THEP1 from Pyrobaculum calidifontis (strain DSM 21063 / JCM 11548 / VA1).